Reading from the N-terminus, the 828-residue chain is Periplasmic nitrate reductase (828 aa).

A signal peptide (tat-type signal) is located at residues 1 to 31; the sequence is MKLSRRSFMKANAVAAAAAAAGLSVPGVARA. In terms of domain architecture, 4Fe-4S Mo/W bis-MGD-type spans 39–95; it reads IKWDKAPCRFCGTGCGVLVGTQQGRVVACQGDPDAPVNRGLNCIKGYFLPKIMYGKD. Cys46, Cys49, Cys53, and Cys81 together coordinate [4Fe-4S] cluster. Mo-bis(molybdopterin guanine dinucleotide)-binding positions include Lys83, Gln150, Asn175, Cys179, 212-219, 243-247, 262-264, Met372, Gln376, Asn482, 508-509, Lys531, Asp558, and 718-727; these read WGSNMAEM, STYQH, QSD, SD, and TGRVLEHWHT. Phe794 contributes to the substrate binding site. Mo-bis(molybdopterin guanine dinucleotide)-binding residues include Asn802 and Lys819.

It belongs to the prokaryotic molybdopterin-containing oxidoreductase family. NasA/NapA/NarB subfamily. As to quaternary structure, component of the periplasmic nitrate reductase NapAB complex composed of NapA and NapB. Requires [4Fe-4S] cluster as cofactor. Mo-bis(molybdopterin guanine dinucleotide) is required as a cofactor. In terms of processing, predicted to be exported by the Tat system. The position of the signal peptide cleavage has not been experimentally proven.

Its subcellular location is the periplasm. It carries out the reaction 2 Fe(II)-[cytochrome] + nitrate + 2 H(+) = 2 Fe(III)-[cytochrome] + nitrite + H2O. Functionally, catalytic subunit of the periplasmic nitrate reductase complex NapAB. Receives electrons from NapB and catalyzes the reduction of nitrate to nitrite. This is Periplasmic nitrate reductase from Escherichia coli O1:K1 / APEC.